Consider the following 59-residue polypeptide: Large ribosomal subunit protein bL32 (59 aa).

This sequence belongs to the bacterial ribosomal protein bL32 family.

In Lactiplantibacillus plantarum (strain ATCC BAA-793 / NCIMB 8826 / WCFS1) (Lactobacillus plantarum), this protein is Large ribosomal subunit protein bL32.